Here is a 432-residue protein sequence, read N- to C-terminus: Adenylosuccinate synthetase (432 aa).

GTP-binding positions include 13 to 19 (GDEGKGK) and 41 to 43 (GHT). D14 acts as the Proton acceptor in catalysis. The Mg(2+) site is built by D14 and G41. IMP is bound by residues 14–17 (DEGK), 39–42 (NAGH), T130, R144, Q225, T240, and R304. The active-site Proton donor is H42. 300–306 (ATTGRKR) lines the substrate pocket. GTP-binding positions include R306, 332–334 (KLD), and 415–417 (STG).

It belongs to the adenylosuccinate synthetase family. As to quaternary structure, homodimer. Mg(2+) is required as a cofactor.

The protein resides in the cytoplasm. The catalysed reaction is IMP + L-aspartate + GTP = N(6)-(1,2-dicarboxyethyl)-AMP + GDP + phosphate + 2 H(+). It participates in purine metabolism; AMP biosynthesis via de novo pathway; AMP from IMP: step 1/2. Its function is as follows. Plays an important role in the de novo pathway of purine nucleotide biosynthesis. Catalyzes the first committed step in the biosynthesis of AMP from IMP. The chain is Adenylosuccinate synthetase from Vibrio cholerae serotype O1 (strain ATCC 39541 / Classical Ogawa 395 / O395).